The chain runs to 259 residues: Proteasome subunit alpha 1 (259 aa).

The tract at residues 231-259 is disordered; sequence LVPAEPAAASESAPEPKPDTETKPADTQD. Residues 233–243 are compositionally biased toward low complexity; sequence PAEPAAASESA. Residues 244–259 are compositionally biased toward basic and acidic residues; the sequence is PEPKPDTETKPADTQD.

The protein belongs to the peptidase T1A family. As to quaternary structure, the 20S proteasome core is composed of 14 alpha and 14 beta subunits that assemble into four stacked heptameric rings, resulting in a barrel-shaped structure. The two inner rings, each composed of seven catalytic beta subunits, are sandwiched by two outer rings, each composed of seven alpha subunits. All four combinations of alpha- and beta-subunits (beta2-alpha1, beta2-alpha2, beta1-alpha2 and beta1-alpha1) yield fully assembled and proteolytically active proteasomes. The catalytic chamber with the active sites is on the inside of the barrel. Has probably a gated structure, the ends of the cylinder being occluded by the N-termini of the alpha-subunits. Is likely capped by the proteasome-associated ATPase, ARC. Post-translationally, the N-terminus is blocked.

Its subcellular location is the cytoplasm. It participates in protein degradation; proteasomal Pup-dependent pathway. Its activity is regulated as follows. The formation of the proteasomal ATPase ARC-20S proteasome complex, likely via the docking of the C-termini of ARC into the intersubunit pockets in the alpha-rings, may trigger opening of the gate for substrate entry. Interconversion between the open-gate and close-gate conformations leads to a dynamic regulation of the 20S proteasome proteolysis activity. Component of the proteasome core, a large protease complex with broad specificity involved in protein degradation. The R.erythropolis proteasomes are able to cleave oligopeptides after Tyr, Phe and Leu, very poorly after Arg but not after Glu. Thus, displays chymotrypsin-like activity, low trypsin-like activity but no caspase-like activity. The protein is Proteasome subunit alpha 1 of Rhodococcus erythropolis (Arthrobacter picolinophilus).